Here is a 396-residue protein sequence, read N- to C-terminus: L-lactate dehydrogenase (396 aa).

Residues 1–380 form the FMN hydroxy acid dehydrogenase domain; sequence MIISAASDYR…SQDSLVQELD (380 aa). Tyr-24 lines the substrate pocket. Residues Ser-106 and Gln-127 each contribute to the FMN site. Position 129 (Tyr-129) interacts with substrate. Thr-155 provides a ligand contact to FMN. Arg-164 contributes to the substrate binding site. Lys-251 serves as a coordination point for FMN. The active-site Proton acceptor is His-275. Arg-278 provides a ligand contact to substrate. 306–330 contributes to the FMN binding site; sequence DSGIRNGLDVVRMIALGADTVLLGR.

This sequence belongs to the FMN-dependent alpha-hydroxy acid dehydrogenase family. Requires FMN as cofactor.

It is found in the cell inner membrane. It catalyses the reaction (S)-lactate + A = pyruvate + AH2. Catalyzes the conversion of L-lactate to pyruvate. Is coupled to the respiratory chain. The polypeptide is L-lactate dehydrogenase (Escherichia fergusonii (strain ATCC 35469 / DSM 13698 / CCUG 18766 / IAM 14443 / JCM 21226 / LMG 7866 / NBRC 102419 / NCTC 12128 / CDC 0568-73)).